The following is a 188-amino-acid chain: MARPISFVTGNAKKLEEVRAILGARFPREIVAVKLDLPELQGEIDDICKLKCLEAARQVKGPVMVEDTCLCFNALKGLPGPYIKWFLDKLGPEGLHKLLDGWEDKSAQAVCTFAYTDRPDGEVILFQGRTEGDIVAPRGPRDFGWDPVFQPTGYDQTYAELPKPKKNEISHRYRALAKLAEHFADESK.

9 to 14 is an ITP binding site; it reads TGNAKK. Residue Glu-39 coordinates Mg(2+). ITP-binding positions include Lys-51, 67-68, Lys-84, 143-146, Lys-166, and 171-172; these read DT, FGWD, and HR.

Belongs to the HAM1 NTPase family. As to quaternary structure, homodimer. The cofactor is Mg(2+). Mn(2+) serves as cofactor.

The protein localises to the cytoplasm. The catalysed reaction is ITP + H2O = IMP + diphosphate + H(+). The enzyme catalyses dITP + H2O = dIMP + diphosphate + H(+). It catalyses the reaction XTP + H2O = XMP + diphosphate + H(+). Functionally, pyrophosphatase that hydrolyzes non-canonical purine nucleotides such as inosine triphosphate (ITP), deoxyinosine triphosphate (dITP) or xanthosine 5'-triphosphate (XTP) to their respective monophosphate derivatives. The enzyme does not distinguish between the deoxy- and ribose forms. Probably excludes non-canonical purines from RNA and DNA precursor pools, thus preventing their incorporation into RNA and DNA and avoiding chromosomal lesions. This is Inosine triphosphate pyrophosphatase from Anopheles gambiae (African malaria mosquito).